Reading from the N-terminus, the 241-residue chain is Probable transcriptional regulatory protein Neut_0281 (241 aa).

This sequence belongs to the TACO1 family.

It localises to the cytoplasm. This chain is Probable transcriptional regulatory protein Neut_0281, found in Nitrosomonas eutropha (strain DSM 101675 / C91 / Nm57).